The sequence spans 573 residues: Potassium-transporting ATPase potassium-binding subunit (573 aa).

The next 10 helical transmembrane spans lie at 6 to 26 (ILFALFIVTIALITKPLGSYI), 66 to 86 (FFSLVSFSVMAFIFVLVILLL), 135 to 155 (ALAVQNFVSAAVGLCVAIALI), 177 to 197 (VFWILLPISIVIAIVYIFQGV), 257 to 277 (IQMVSIFAIAAALTYTFGKWV), 283 to 303 (GWLIFGVMLVLFIISLVVMTI), 382 to 402 (IFGGVGAGFYGFFMFLMLAVF), 428 to 448 (MFALLISLCCVLVFTGLAAVI), 493 to 513 (ITIALSMLIGRFGVIFAVIML), and 537 to 557 (FIFAILVFFTILLIGGLTIFP).

It belongs to the KdpA family. As to quaternary structure, the system is composed of three essential subunits: KdpA, KdpB and KdpC.

It is found in the cell inner membrane. In terms of biological role, part of the high-affinity ATP-driven potassium transport (or Kdp) system, which catalyzes the hydrolysis of ATP coupled with the electrogenic transport of potassium into the cytoplasm. This subunit binds the periplasmic potassium ions and delivers the ions to the membrane domain of KdpB through an intramembrane tunnel. This chain is Potassium-transporting ATPase potassium-binding subunit, found in Francisella tularensis subsp. tularensis (strain WY96-3418).